Here is a 174-residue protein sequence, read N- to C-terminus: Shikimate kinase (174 aa).

Gly-14 to Thr-19 lines the ATP pocket. Ser-18 is a Mg(2+) binding site. Substrate-binding residues include Asp-36, Arg-60, and Gly-82. Arg-120 serves as a coordination point for ATP. Arg-139 provides a ligand contact to substrate. Position 156 (Gln-156) interacts with ATP.

It belongs to the shikimate kinase family. Monomer. Mg(2+) serves as cofactor.

The protein localises to the cytoplasm. It carries out the reaction shikimate + ATP = 3-phosphoshikimate + ADP + H(+). Its pathway is metabolic intermediate biosynthesis; chorismate biosynthesis; chorismate from D-erythrose 4-phosphate and phosphoenolpyruvate: step 5/7. Catalyzes the specific phosphorylation of the 3-hydroxyl group of shikimic acid using ATP as a cosubstrate. The chain is Shikimate kinase from Vibrio cholerae serotype O1 (strain ATCC 39541 / Classical Ogawa 395 / O395).